Here is a 204-residue protein sequence, read N- to C-terminus: Recombination protein RecR (204 aa).

The segment at 63 to 78 (CNRCFNITVEDPCTIC) adopts a C4-type zinc-finger fold. The Toprim domain maps to 86-181 (RQVCVVEEPL…RVTRLARGLP (96 aa)).

This sequence belongs to the RecR family.

May play a role in DNA repair. It seems to be involved in an RecBC-independent recombinational process of DNA repair. It may act with RecF and RecO. This Herpetosiphon aurantiacus (strain ATCC 23779 / DSM 785 / 114-95) protein is Recombination protein RecR.